The chain runs to 347 residues: Bombesin receptor-activated protein C6orf89 homolog (347 aa).

At 1-58 (MDLAANEISIYDKLSETVDLVRQTGHQCGMSEKAIEKFIRQLLEKNEPQRPPPQYPLL) the chain is on the cytoplasmic side. A helical membrane pass occupies residues 59–79 (IVVYKVLATLGLILLTAYFVI). At 80 to 347 (QPFSPLAPEP…ICDGTAFSEL (268 aa)) the chain is on the extracellular side.

As to quaternary structure, homodimer. Interacts with BRS3. Interacts (via N-terminus) with SIN3B. Glycosylated.

It is found in the golgi apparatus membrane. Its subcellular location is the cytoplasm. Its function is as follows. Exhibits histone deacetylase (HDAC) enhancer properties. May play a role in cell cycle progression and wound repair of bronchial epithelial cells. In Pongo abelii (Sumatran orangutan), this protein is Bombesin receptor-activated protein C6orf89 homolog.